Consider the following 437-residue polypeptide: GTPase Der (437 aa).

EngA-type G domains follow at residues 4 to 168 (PVVA…PAED) and 177 to 352 (IRVS…QAHS). Residues 10-17 (GRPNVGKS), 57-61 (DTGGI), 120-123 (NKAD), 183-190 (GRPNVGKS), 230-234 (DTAGM), and 295-298 (NKWD) each bind GTP. Residues 353-437 (MRIPTAVLND…PVRIWTRKKT (85 aa)) form the KH-like domain.

This sequence belongs to the TRAFAC class TrmE-Era-EngA-EngB-Septin-like GTPase superfamily. EngA (Der) GTPase family. Associates with the 50S ribosomal subunit.

In terms of biological role, GTPase that plays an essential role in the late steps of ribosome biogenesis. In Brevibacillus brevis (strain 47 / JCM 6285 / NBRC 100599), this protein is GTPase Der.